The following is a 294-amino-acid chain: Endonuclease G, mitochondrial (294 aa).

Residues methionine 1–alanine 44 constitute a mitochondrion transit peptide. Threonine 125 carries the phosphothreonine modification. Catalysis depends on histidine 138, which acts as the Proton acceptor. Asparagine 169 provides a ligand contact to Mg(2+). The interval alanine 283 to serine 293 is essential for deoxyribonuclease activity.

Belongs to the DNA/RNA non-specific endonuclease family. As to quaternary structure, homodimer; disulfide-linked. Homodimerization is essential for its activity. Interacts with YWHAG. The cofactor is Mg(2+). GSK3-beta-mediated phosphorylation at Thr-125 is necessary for its interaction with YWHAG and the induction of autophagy.

It is found in the mitochondrion. Functionally, endonuclease that preferentially catalyzes the cleavage of double-stranded 5-hydroxymethylcytosine (5hmC)-modified DNA. The 5hmC-modified nucleotide does not increase the binding affinity, but instead increases the efficiency of cutting and specifies the site of cleavage for the modified DNAs. Shows significantly higher affinity for four-stranded Holliday junction over duplex and single-stranded DNAs. Promotes conservative recombination when the DNA is 5hmC-modified. Promotes autophagy through the suppression of mTOR by its phosphorylation-mediated interaction with YWHAG and its endonuclease activity-mediated DNA damage response. GSK3-beta mediated phosphorylation of ENDOG enhances its interaction with YWHAG, leading to the release of TSC2 and PIK3C3 from YWHAG resulting in mTOR pathway suppression and autophagy initiation. Promotes cleavage of mtDNA in response to oxidative and nitrosative stress, in turn inducing compensatory mtDNA replication. This is Endonuclease G, mitochondrial (Endog) from Mus musculus (Mouse).